A 594-amino-acid polypeptide reads, in one-letter code: P-granule-associated novel protein 1 (594 aa).

The first 18 residues, 1–18, serve as a signal peptide directing secretion; that stretch reads MRSLLSFVLLALARIAIS. Residues 19 to 513 are Extracellular-facing; the sequence is EETKSCIDIE…PEEEEVYRSG (495 aa). 15 LRR repeats span residues 78–101, 103–124, 125–149, 150–173, 175–197, 198–221, 222–245, 246–269, 271–290, 291–315, 318–341, 343–365, 374–397, 399–419, and 420–442; these read GTEL…LFEN, FAKQ…SFQS, LGGS…LFTG, LKSL…AFEE, KKVE…TFDG, MKNL…AFRG, LNSL…IFSA, LKNL…SFPK, EKLV…KLKD, LPSL…MFGL, SDRI…AFQH, PNLI…SPSQ, LKKL…ELPK, LSSL…ALEG, and MEIK…TFDS. Residues 514-534 form a helical membrane-spanning segment; sequence WITVAATILTIVTIVIMVIIA. Topologically, residues 535–594 are cytoplasmic; the sequence is MLYFKDARYQFPLRGRRSDSDLHKLIENDPLNIASDSILVVPAMPKRNTGPKKTVRFQNF.

As to quaternary structure, interacts with glh-1. Interacts (via LRR regions) with myrf-1 (via C-terminus); the interaction promotes the role of myrf-1 in the synaptic remodeling of DD GABAergic motor neurons at the cell membrane. As to expression, expressed in the germline and somatic cells. In terms of tissue distribution, expressed in the germline and somatic cells. Expressed at higher levels in germline cells relative to somatic cells. Expressed in germline cells. As to expression, highly expressed in the pharynx and at lower levels in the intestine, but not detected in other tissues. Other studies suggest a broader expression pattern in somatic tissues: from embryogenesis to adult stages, expressed strongly in body wall muscle, vulva, somatic gonad and pharynx, at lower levels in the nerve ring, hypodermis, and rectal epithelia, and very weakly in the intestine.

It is found in the cytoplasm. The protein resides in the apical cell membrane. Regulates diverse developmental processes including larval molting and gonad maturation. Its function is as follows. Promotes the localization of myrf-1 and myrf-2 to the cell membrane. In association with myrf-1, promotes the synaptic remodeling of DD GABAergic motor neurons whereby new synapses form in the dorsal processes of DD neurons. The sequence is that of P-granule-associated novel protein 1 from Caenorhabditis elegans.